We begin with the raw amino-acid sequence, 329 residues long: 3-dehydroquinate synthase (329 aa).

This sequence belongs to the archaeal-type DHQ synthase family.

The catalysed reaction is 2-amino-2,3,7-trideoxy-D-lyxo-hept-6-ulosonate + NAD(+) + H2O = 3-dehydroquinate + NH4(+) + NADH + H(+). Functionally, catalyzes the oxidative deamination and cyclization of 2-amino-3,7-dideoxy-D-threo-hept-6-ulosonic acid (ADH) to yield 3-dehydroquinate (DHQ), which is fed into the canonical shikimic pathway of aromatic amino acid biosynthesis. In Methanoregula boonei (strain DSM 21154 / JCM 14090 / 6A8), this protein is 3-dehydroquinate synthase.